The primary structure comprises 153 residues: uncharacterized protein (153 aa).

This is an uncharacterized protein from Allochromatium vinosum (strain ATCC 17899 / DSM 180 / NBRC 103801 / NCIMB 10441 / D) (Chromatium vinosum).